The sequence spans 156 residues: SsrA-binding protein (156 aa).

The disordered stretch occupies residues 134–156; that stretch reads YDKRETLKRKEQDREMARALRKR.

It belongs to the SmpB family.

The protein localises to the cytoplasm. Functionally, required for rescue of stalled ribosomes mediated by trans-translation. Binds to transfer-messenger RNA (tmRNA), required for stable association of tmRNA with ribosomes. tmRNA and SmpB together mimic tRNA shape, replacing the anticodon stem-loop with SmpB. tmRNA is encoded by the ssrA gene; the 2 termini fold to resemble tRNA(Ala) and it encodes a 'tag peptide', a short internal open reading frame. During trans-translation Ala-aminoacylated tmRNA acts like a tRNA, entering the A-site of stalled ribosomes, displacing the stalled mRNA. The ribosome then switches to translate the ORF on the tmRNA; the nascent peptide is terminated with the 'tag peptide' encoded by the tmRNA and targeted for degradation. The ribosome is freed to recommence translation, which seems to be the essential function of trans-translation. The sequence is that of SsrA-binding protein from Latilactobacillus sakei subsp. sakei (strain 23K) (Lactobacillus sakei subsp. sakei).